The primary structure comprises 619 residues: Chaperone protein HscA homolog (619 aa).

This sequence belongs to the heat shock protein 70 family.

Its function is as follows. Chaperone involved in the maturation of iron-sulfur cluster-containing proteins. Has a low intrinsic ATPase activity which is markedly stimulated by HscB. The protein is Chaperone protein HscA homolog of Azotobacter vinelandii.